Consider the following 564-residue polypeptide: Efflux pump DEP3 (564 aa).

The span at Met1–Arg12 shows a compositional bias: polar residues. The interval Met1–Pro48 is disordered. Residues Pro29–Gly38 show a composition bias toward basic and acidic residues. 14 consecutive transmembrane segments (helical) span residues Ser65–Ile85, Leu91–Trp111, Trp122–Pro142, Val152–Leu172, Ser185–Ala205, Trp212–Phe232, Ala255–Val275, Gly281–Leu301, Phe332–Ile352, Val362–Met382, Gly386–Met406, Ile423–Leu443, Ala452–Gly472, and Thr528–Leu548.

It belongs to the major facilitator superfamily. TCR/Tet family.

It is found in the cell membrane. Its function is as follows. Efflux pump; part of the gene cluster that mediates the biosynthesis of depudecin, a highly oxidized eleven-carbon linear polyketide that acts as a histone deacetylase (HDAC) inhibitor and makes a small contribution to pathogenesis. Is presumed either to be responsible for exporting depudecin, to provide self-protection, or both. This is Efflux pump DEP3 from Alternaria brassicicola (Dark leaf spot agent).